We begin with the raw amino-acid sequence, 81 residues long: ATP synthase subunit c, chloroplastic (81 aa).

The next 2 helical transmembrane spans lie at 3–23 and 57–77; these read PLISAASVIAAGLAVGLASIG and LAFMEALSIYGLVVALALLFA.

It belongs to the ATPase C chain family. F-type ATPases have 2 components, F(1) - the catalytic core - and F(0) - the membrane proton channel. F(1) has five subunits: alpha(3), beta(3), gamma(1), delta(1), epsilon(1). F(0) has four main subunits: a(1), b(1), b'(1) and c(10-14). The alpha and beta chains form an alternating ring which encloses part of the gamma chain. F(1) is attached to F(0) by a central stalk formed by the gamma and epsilon chains, while a peripheral stalk is formed by the delta, b and b' chains.

Its subcellular location is the plastid. The protein localises to the chloroplast thylakoid membrane. Functionally, f(1)F(0) ATP synthase produces ATP from ADP in the presence of a proton or sodium gradient. F-type ATPases consist of two structural domains, F(1) containing the extramembraneous catalytic core and F(0) containing the membrane proton channel, linked together by a central stalk and a peripheral stalk. During catalysis, ATP synthesis in the catalytic domain of F(1) is coupled via a rotary mechanism of the central stalk subunits to proton translocation. In terms of biological role, key component of the F(0) channel; it plays a direct role in translocation across the membrane. A homomeric c-ring of between 10-14 subunits forms the central stalk rotor element with the F(1) delta and epsilon subunits. In Gossypium barbadense (Sea Island cotton), this protein is ATP synthase subunit c, chloroplastic.